A 484-amino-acid polypeptide reads, in one-letter code: Bifunctional protein HldE (484 aa).

The ribokinase stretch occupies residues 1–320 (MDFSSITVLC…AELNAQDADA (320 aa)). 195–198 (NARE) serves as a coordination point for ATP. D265 is a catalytic residue. The interval 349–484 (FTNGCFDIIH…RIRAAGAADR (136 aa)) is cytidylyltransferase.

In the N-terminal section; belongs to the carbohydrate kinase PfkB family. This sequence in the C-terminal section; belongs to the cytidylyltransferase family. Homodimer.

It catalyses the reaction D-glycero-beta-D-manno-heptose 7-phosphate + ATP = D-glycero-beta-D-manno-heptose 1,7-bisphosphate + ADP + H(+). The enzyme catalyses D-glycero-beta-D-manno-heptose 1-phosphate + ATP + H(+) = ADP-D-glycero-beta-D-manno-heptose + diphosphate. It functions in the pathway nucleotide-sugar biosynthesis; ADP-L-glycero-beta-D-manno-heptose biosynthesis; ADP-L-glycero-beta-D-manno-heptose from D-glycero-beta-D-manno-heptose 7-phosphate: step 1/4. The protein operates within nucleotide-sugar biosynthesis; ADP-L-glycero-beta-D-manno-heptose biosynthesis; ADP-L-glycero-beta-D-manno-heptose from D-glycero-beta-D-manno-heptose 7-phosphate: step 3/4. Functionally, catalyzes the phosphorylation of D-glycero-D-manno-heptose 7-phosphate at the C-1 position to selectively form D-glycero-beta-D-manno-heptose-1,7-bisphosphate. Catalyzes the ADP transfer from ATP to D-glycero-beta-D-manno-heptose 1-phosphate, yielding ADP-D-glycero-beta-D-manno-heptose. This Gluconacetobacter diazotrophicus (strain ATCC 49037 / DSM 5601 / CCUG 37298 / CIP 103539 / LMG 7603 / PAl5) protein is Bifunctional protein HldE.